The following is a 223-amino-acid chain: Protein Mis18-alpha (223 aa).

Residues 1 to 30 (MAGTFSLEPCSTSSSCNHQGKRSESSLLEK) are disordered. The span at 9-18 (PCSTSSSCNH) shows a compositional bias: polar residues. Over residues 21-30 (KRSESSLLEK) the composition is skewed to basic and acidic residues. Phosphoserine occurs at positions 33, 36, and 37. One can recognise a Mis18 domain in the interval 71-169 (PLVFLCTRCR…SVEAVESYTL (99 aa)). Residues Cys76, Cys79, Cys132, and Cys135 each coordinate Zn(2+). Lys153 participates in a covalent cross-link: Glycyl lysine isopeptide (Lys-Gly) (interchain with G-Cter in SUMO2). Ser223 bears the Phosphoserine mark.

Belongs to the mis18 family. As to quaternary structure, homodimer, and heterodimer with OIP5/MIS18B. Identified in a complex containing MIS18A, OIP5/MIS18B, MIS18BP1, RBBP7 and RBBP4.

The protein resides in the nucleus. It is found in the chromosome. It localises to the centromere. In terms of biological role, required for recruitment of CENPA to centromeres and normal chromosome segregation during mitosis. This is Protein Mis18-alpha (Mis18a) from Rattus norvegicus (Rat).